The chain runs to 95 residues: Small ribosomal subunit protein bS20 (95 aa).

This sequence belongs to the bacterial ribosomal protein bS20 family.

In terms of biological role, binds directly to 16S ribosomal RNA. The sequence is that of Small ribosomal subunit protein bS20 from Ehrlichia chaffeensis (strain ATCC CRL-10679 / Arkansas).